Reading from the N-terminus, the 184-residue chain is Ubiquitin-conjugating enzyme E2-23 kDa (184 aa).

A UBC core domain is found at 1 to 148 (MSSPSKRREM…VKEYCERYAK (148 aa)). Cys85 functions as the Glycyl thioester intermediate in the catalytic mechanism. A disordered region spans residues 146–184 (YAKPEDISPEEEEEESDEELSDAEGYDSGDEAIMGHADP). Positions 152–175 (ISPEEEEEESDEELSDAEGYDSGD) are enriched in acidic residues.

This sequence belongs to the ubiquitin-conjugating enzyme family.

It catalyses the reaction S-ubiquitinyl-[E1 ubiquitin-activating enzyme]-L-cysteine + [E2 ubiquitin-conjugating enzyme]-L-cysteine = [E1 ubiquitin-activating enzyme]-L-cysteine + S-ubiquitinyl-[E2 ubiquitin-conjugating enzyme]-L-cysteine.. It participates in protein modification; protein ubiquitination. Catalyzes the covalent attachment of ubiquitin to other proteins. This chain is Ubiquitin-conjugating enzyme E2-23 kDa (UBC4), found in Triticum aestivum (Wheat).